A 306-amino-acid chain; its full sequence is tRNA pseudouridine synthase B (306 aa).

Asp43 functions as the Nucleophile in the catalytic mechanism.

It belongs to the pseudouridine synthase TruB family. Type 1 subfamily.

It carries out the reaction uridine(55) in tRNA = pseudouridine(55) in tRNA. Responsible for synthesis of pseudouridine from uracil-55 in the psi GC loop of transfer RNAs. The polypeptide is tRNA pseudouridine synthase B (Anaplasma marginale (strain St. Maries)).